Consider the following 424-residue polypeptide: Putative histone deacetylase complex subunit cti6 (424 aa).

Disordered stretches follow at residues 1–49, 117–155, 170–341, and 381–405; these read MPSN…GEVT, SKYLGNGKPIEASQTEESSSTPPSPATKKSSKQRLTMNS, KEKS…PDGT, and AQSAGNQSSTKSSKEGPEEEKETLR. Residues 48–103 form a PHD-type zinc finger; sequence VTRCVCGIVESDDEASDGGLYIQCDQCSVWQHGNCVGFADESEVPEVYYCEICHPE. Residues 127-137 are compositionally biased toward low complexity; sequence EASQTEESSST. Ser-187 carries the phosphoserine modification. Positions 241–256 are enriched in acidic residues; the sequence is DAPEEETVDTVEEIAD. Positions 257 to 266 are enriched in basic and acidic residues; that stretch reads EEKHSVKEES. The span at 272-287 shows a compositional bias: low complexity; the sequence is QSSQQSTITSISTTTR. Positions 294–303 are enriched in basic and acidic residues; it reads REAAAEDKAD. A compositionally biased stretch (basic residues) spans 313-324; that stretch reads SKTRKVGGRRGK. Residues 392–405 show a composition bias toward basic and acidic residues; sequence SSKEGPEEEKETLR.

The protein localises to the cytoplasm. It localises to the nucleus. Functionally, could be a component of the RPD3C(L) histone deacetylase complex (HDAC). In Schizosaccharomyces pombe (strain 972 / ATCC 24843) (Fission yeast), this protein is Putative histone deacetylase complex subunit cti6 (cti6).